The primary structure comprises 282 residues: uncharacterized protein (282 aa).

A run of 5 helical transmembrane segments spans residues 9–29 (LLKIFVVGVFPCTLFVNAPHG), 43–63 (ISGRVGWVLMELVAPLTFLYA), 123–143 (VFVSAVLFNFLNGMSIGLYLV), 158–178 (YIGMFLWLMGWLGNMYHDNIL), and 232–252 (LAAGPSAEPFWWFFLSEILLM).

It belongs to the steroid 5-alpha reductase family.

Its subcellular location is the endoplasmic reticulum membrane. This is an uncharacterized protein from Schizosaccharomyces pombe (strain 972 / ATCC 24843) (Fission yeast).